The following is a 67-amino-acid chain: Sec-independent protein translocase protein TatA (67 aa).

Residues 1 to 21 form a helical membrane-spanning segment; sequence MFGLGGQELVLILLIVLLLFG.

It belongs to the TatA/E family. As to quaternary structure, forms a complex with TatC.

It localises to the cell inner membrane. In terms of biological role, part of the twin-arginine translocation (Tat) system that transports large folded proteins containing a characteristic twin-arginine motif in their signal peptide across membranes. TatA could form the protein-conducting channel of the Tat system. This chain is Sec-independent protein translocase protein TatA, found in Chlorobaculum tepidum (strain ATCC 49652 / DSM 12025 / NBRC 103806 / TLS) (Chlorobium tepidum).